We begin with the raw amino-acid sequence, 174 residues long: N5-carboxyaminoimidazole ribonucleotide mutase (174 aa).

Substrate is bound by residues serine 15, aspartate 18, and arginine 45.

This sequence belongs to the AIR carboxylase family. Class I subfamily.

It carries out the reaction 5-carboxyamino-1-(5-phospho-D-ribosyl)imidazole + H(+) = 5-amino-1-(5-phospho-D-ribosyl)imidazole-4-carboxylate. It participates in purine metabolism; IMP biosynthesis via de novo pathway; 5-amino-1-(5-phospho-D-ribosyl)imidazole-4-carboxylate from 5-amino-1-(5-phospho-D-ribosyl)imidazole (N5-CAIR route): step 2/2. In terms of biological role, catalyzes the conversion of N5-carboxyaminoimidazole ribonucleotide (N5-CAIR) to 4-carboxy-5-aminoimidazole ribonucleotide (CAIR). This is N5-carboxyaminoimidazole ribonucleotide mutase from Pyrococcus abyssi (strain GE5 / Orsay).